A 494-amino-acid polypeptide reads, in one-letter code: MAQPPPDQNFYHHPLPHTHTHPHPHSHPHPHSHPHPHHQHPQLQLPPQFRNPFDLLFDERTGAINYNYIRPYLPNQMPKPDVFPSEELPDSLVMRRPRRTRTTFTSSQIAELEQHFLQGRYLTAPRLADLSAKLALGTAQVKIWFKNRRRRHKIQSDQHKDQSYEGMPLSPGMKQSDGDPPSLQTLSLGGGATPNALTPSPTPSTPTAHMTEHYSESFNAYYNYNGGHNHAQANRHMHMQYPSGGGPGPGSTNVNGGQFFQQQQVHNHQQQLHHQGNHVPHQMQQQQQQAQQQQYHHFDFQQKQASACRVLVKDEPEADYNFNSSYYMRSGMSGATASASAVARGAASPGSEVYEPLTPKNDESPSLCGIGIGGPCAIAVGETEAADDMDDGTSKKTTLQILEPLKGLDKSCDDGSSDDMSTGIRALAGTGNRGAAFAKFGKPSPPQGPQPPLGMGGVAMGESNQYQCTMDTIMQAYNPHRNAAGNSQFAYCFN.

Disordered regions lie at residues 1-49 (MAQP…PPQF), 149-210 (RRRH…TAHM), and 263-293 (QQVHNHQQQLHHQGNHVPHQMQQQQQQAQQQ). The span at 14–40 (PLPHTHTHPHPHSHPHPHSHPHPHHQH) shows a compositional bias: basic residues. Positions 97–156 (PRRTRTTFTSSQIAELEQHFLQGRYLTAPRLADLSAKLALGTAQVKIWFKNRRRRHKIQS) form a DNA-binding region, homeobox. Basic and acidic residues predominate over residues 154 to 163 (IQSDQHKDQS). Residues 433–440 (RGAAFAKF) form an RNA-binding region.

This sequence belongs to the paired homeobox family. Bicoid subfamily. As to quaternary structure, interacts with Bin1; in vitro and yeast cells. Interacts with bin3. Maternal expression is an anterior cap concentrated in the cortical cytoplasm. Its transcript is produced maternally and sequestered near the anterior pole of the mature oocyte. After egg deposition, it is translated into protein, which diffuses toward the posterior, forming a long-range anterior gradient.

It localises to the nucleus. Its function is as follows. Segment polarity transcription factor that provides positional cues for the development of head and thoracic segments. Forms a protein concentration gradient that patterns the anterior-posterior axis during embryogenesis and promotes the expression of anterior gap genes, such as hunchback (hb), ocelliless (oc), and buttonhead (btd). Binds to regulatory DNA sequences containing a 5'-TAATCC-3' sequence motif. Also binds RNA. Interacts with Bin1 to repress transcription of bicoid target genes in the anterior tip of the embryo; a process known as retraction. The sequence is that of Homeotic protein bicoid from Drosophila melanogaster (Fruit fly).